The sequence spans 625 residues: Probable potassium transport system protein Kup (625 aa).

Helical transmembrane passes span 10-30, 50-70, 102-122, 142-162, 172-192, 215-235, 250-270, 284-304, 340-360, 369-389, 397-417, and 422-442; these read LAAL…TSPL, LLGV…LKYV, YFPL…DSVI, FDPY…SVQA, FGPI…VNII, FLAF…EALY, WFLV…ALLL, LGAW…IIAS, IYIP…VVGF, AYGI…FFVI, LLLC…LFSA, and LFHG…LMLT.

It belongs to the HAK/KUP transporter (TC 2.A.72) family.

Its subcellular location is the cell inner membrane. It carries out the reaction K(+)(in) + H(+)(in) = K(+)(out) + H(+)(out). Transport of potassium into the cell. Likely operates as a K(+):H(+) symporter. The polypeptide is Probable potassium transport system protein Kup (Janthinobacterium sp. (strain Marseille) (Minibacterium massiliensis)).